Reading from the N-terminus, the 351-residue chain is sn-1 oleoyl-lipid 12-desaturase (351 aa).

2 helical membrane passes run 46-66 and 68-88; these read WASV…IIYL and WYCL…AFVV. A Histidine box-1 motif is present at residues 90–94; it reads HDCGH. The helical transmembrane segment at 102 to 122 threads the bilayer; that stretch reads WVNDLVGHIAFAPLIYPFHSW. The Histidine box-2 motif lies at 126–130; it reads HDHHH. Transmembrane regions (helical) follow at residues 199-219 and 222-242; these read IAVV…TTGV and FVKF…TFTI. Residues 290–294 carry the Histidine box-3 motif; it reads HHLSV.

It belongs to the fatty acid desaturase type 2 family. The cofactor is Fe(2+).

Its subcellular location is the membrane. It carries out the reaction a 1-[(9Z)-octadecenoyl]-2-acyl-glycerolipid + 2 reduced [2Fe-2S]-[ferredoxin] + O2 + 2 H(+) = a 1-[(9Z,12Z)-octadecdienoyl]-2-acyl-glycerolipid + 2 oxidized [2Fe-2S]-[ferredoxin] + 2 H2O. It participates in lipid metabolism; polyunsaturated fatty acid biosynthesis. Its function is as follows. Desaturase involved in fatty acid biosynthesis. Introduces a double bond at carbon 12 of oleoyl groups (18:1) attached to the sn-1 position of the glycerol moiety of membrane glycerolipids. This enzyme is involved in chilling tolerance because the phase transition temperature of lipids of cellular membranes depends on the degree of unsaturation of fatty acids of the membrane lipids. This is sn-1 oleoyl-lipid 12-desaturase from Synechocystis sp. (strain ATCC 27184 / PCC 6803 / Kazusa).